The primary structure comprises 674 residues: CRS2-associated factor 1, chloroplastic (674 aa).

Residues 1–54 (MATARLPSRSFLSPAQQSYPRLPASVRLCLSHHEQPPTGPKRHRRAATSHPAFS) constitute a chloroplast transit peptide. Residues 31 to 61 (SHHEQPPTGPKRHRRAATSHPAFSAAARGRA) are disordered. The span at 48-57 (TSHPAFSAAA) shows a compositional bias: low complexity. CRM domains lie at 183 to 279 (EPLT…TRPC) and 301 to 397 (GGLT…LPPL). The interval 554-576 (GLLCLLEQAIHSGRALVLSEDEL) is CRS2 binding.

In terms of assembly, interacts with CRS2 and RNA. Part of large ribonucleo-protein complexes that include group IIB introns, CRS2 and CAF1.

The protein localises to the plastid. Its subcellular location is the chloroplast stroma. Required for the splicing of group IIB introns in chloroplasts. Forms splicing particles with CRS2. Interacts with RNA and confers intron specificity of the splicing particles. This Zea mays (Maize) protein is CRS2-associated factor 1, chloroplastic (CAF1).